Here is a 599-residue protein sequence, read N- to C-terminus: DNA primase (599 aa).

The segment at 38–62 (CPFHDEKTPSFTVSEDKQICHCFGC) adopts a CHC2-type zinc-finger fold. The 82-residue stretch at 260–341 (DEIVLLEGFM…NVFVIQLPSG (82 aa)) folds into the Toprim domain. Mg(2+) contacts are provided by E266, D310, and D312.

This sequence belongs to the DnaG primase family. Monomer. Interacts with DnaB. Zn(2+) is required as a cofactor. The cofactor is Mg(2+).

It carries out the reaction ssDNA + n NTP = ssDNA/pppN(pN)n-1 hybrid + (n-1) diphosphate.. RNA polymerase that catalyzes the synthesis of short RNA molecules used as primers for DNA polymerase during DNA replication. In Staphylococcus aureus (strain MRSA252), this protein is DNA primase.